Consider the following 595-residue polypeptide: Chaperone protein HscA homolog (595 aa).

Belongs to the heat shock protein 70 family.

In terms of biological role, chaperone involved in the maturation of iron-sulfur cluster-containing proteins. Has a low intrinsic ATPase activity which is markedly stimulated by HscB. This chain is Chaperone protein HscA homolog, found in Rickettsia akari (strain Hartford).